The primary structure comprises 585 residues: Protein FAM151A (585 aa).

A helical transmembrane segment spans residues 14–34 (WVFASITCVSAVAIAAIVLAI).

Belongs to the menorin family.

The protein localises to the membrane. This is Protein FAM151A (FAM151A) from Pongo abelii (Sumatran orangutan).